A 638-amino-acid chain; its full sequence is 1-deoxy-D-xylulose-5-phosphate synthase (638 aa).

Thiamine diphosphate is bound by residues His-72 and 113–115; that span reads GHA. Asp-144 is a binding site for Mg(2+). Residues 145-146, Asn-174, Tyr-287, and Glu-370 contribute to the thiamine diphosphate site; that span reads GA. Mg(2+) is bound at residue Asn-174.

This sequence belongs to the transketolase family. DXPS subfamily. In terms of assembly, homodimer. The cofactor is Mg(2+). Requires thiamine diphosphate as cofactor.

It catalyses the reaction D-glyceraldehyde 3-phosphate + pyruvate + H(+) = 1-deoxy-D-xylulose 5-phosphate + CO2. Its pathway is metabolic intermediate biosynthesis; 1-deoxy-D-xylulose 5-phosphate biosynthesis; 1-deoxy-D-xylulose 5-phosphate from D-glyceraldehyde 3-phosphate and pyruvate: step 1/1. Catalyzes the acyloin condensation reaction between C atoms 2 and 3 of pyruvate and glyceraldehyde 3-phosphate to yield 1-deoxy-D-xylulose-5-phosphate (DXP). In Picosynechococcus sp. (strain ATCC 27264 / PCC 7002 / PR-6) (Agmenellum quadruplicatum), this protein is 1-deoxy-D-xylulose-5-phosphate synthase.